We begin with the raw amino-acid sequence, 301 residues long: Transcription factor bHLH103 (301 aa).

A KRAB domain is found at 29-106 (PRSAEIVVDF…LEGLFDSSEQ (78 aa)). Disordered stretches follow at residues 161-184 (EKSG…ETPS) and 239-272 (TSPH…PRQD). Residues 180–229 (LETPSHFPSFKVRKEKLGDRITALQQLVSPFGKTDTASVLHDAIDYIKFL) form the bHLH domain. Residues 239-269 (TSPHLNSIGSGEQKQWSDKSSNNTHNQNCSP) show a composition bias toward polar residues.

In terms of assembly, homodimer. As to expression, mature root endodermis.

It localises to the nucleus. The protein is Transcription factor bHLH103 (BHLH103) of Arabidopsis thaliana (Mouse-ear cress).